The primary structure comprises 250 residues: Bis(5'-nucleosyl)-tetraphosphatase PrpE [asymmetrical] (250 aa).

The protein belongs to the PrpE family. Ni(2+) is required as a cofactor.

The enzyme catalyses P(1),P(4)-bis(5'-guanosyl) tetraphosphate + H2O = GMP + GTP + 2 H(+). Asymmetrically hydrolyzes Ap4p to yield AMP and ATP. This chain is Bis(5'-nucleosyl)-tetraphosphatase PrpE [asymmetrical], found in Oceanobacillus iheyensis (strain DSM 14371 / CIP 107618 / JCM 11309 / KCTC 3954 / HTE831).